We begin with the raw amino-acid sequence, 160 residues long: Transcription elongation factor GreA (160 aa).

Positions 1–72 form a coiled coil; the sequence is MAEKTYPMTL…QISSLETKIR (72 aa).

This sequence belongs to the GreA/GreB family.

In terms of biological role, necessary for efficient RNA polymerase transcription elongation past template-encoded arresting sites. The arresting sites in DNA have the property of trapping a certain fraction of elongating RNA polymerases that pass through, resulting in locked ternary complexes. Cleavage of the nascent transcript by cleavage factors such as GreA or GreB allows the resumption of elongation from the new 3'terminus. GreA releases sequences of 2 to 3 nucleotides. This chain is Transcription elongation factor GreA, found in Streptococcus pneumoniae (strain ATCC 700669 / Spain 23F-1).